The primary structure comprises 238 residues: Cysteine-rich venom protein (238 aa).

A signal peptide spans 1-19; sequence MIAFIVLLSLAAVLQQSSG. The 127-residue stretch at 38–164 folds into the SCP domain; sequence VDKHNALRRS…STKYLYVCQY (127 aa). Disulfide bonds link Cys75/Cys153, Cys92/Cys165, Cys148/Cys162, Cys184/Cys191, Cys187/Cys196, Cys200/Cys233, Cys209/Cys227, and Cys218/Cys231. The ShKT domain occupies 200–233; that stretch reads CKYEDAFTNCKALAKKTKCKTEWIKSKCPATCFC.

The protein belongs to the CRISP family. Expressed by the venom gland.

Its subcellular location is the secreted. In terms of biological role, blocks contraction of smooth muscle elicited by high potassium-induced depolarization, but does not block caffeine-stimulated contraction. May target voltage-gated calcium channels on smooth muscle. This is Cysteine-rich venom protein from Austrelaps superbus (Lowland copperhead snake).